Here is a 120-residue protein sequence, read N- to C-terminus: Basic phospholipase A2 homolog piratoxin-3 (120 aa).

Cystine bridges form between cysteine 26/cysteine 113, cysteine 28/cysteine 44, cysteine 43/cysteine 94, cysteine 49/cysteine 120, cysteine 50/cysteine 87, cysteine 57/cysteine 81, and cysteine 75/cysteine 85. The important for membrane-damaging activities in eukaryotes and bacteria; heparin-binding stretch occupies residues 104–115 (KKYRYHLKPCKK).

Belongs to the phospholipase A2 family. Group II subfamily. D49 sub-subfamily. Homodimer; non-covalently linked (probable alternative/compact dimer conformation). As to expression, expressed by the venom gland.

The protein resides in the secreted. Functionally, snake venom phospholipase A2 (PLA2) that lacks enzymatic activity. Shows high myotoxin activities. Also has anticoagulant activity. A model of myotoxic mechanism has been proposed: an apo Lys49-PLA2 is activated by the entrance of a hydrophobic molecule (e.g. fatty acid) at the hydrophobic channel of the protein leading to a reorientation of a monomer. This reorientation causes a transition between 'inactive' to 'active' states, causing alignment of C-terminal and membrane-docking sites (MDoS) side-by-side and putting the membrane-disruption sites (MDiS) in the same plane, exposed to solvent and in a symmetric position for both monomers. The MDoS region stabilizes the toxin on membrane by the interaction of charged residues with phospholipid head groups. Subsequently, the MDiS region destabilizes the membrane with penetration of hydrophobic residues. This insertion causes a disorganization of the membrane, allowing an uncontrolled influx of ions (i.e. calcium and sodium), and eventually triggering irreversible intracellular alterations and cell death. This chain is Basic phospholipase A2 homolog piratoxin-3, found in Bothrops pirajai (Piraja's lancehead).